Here is a 139-residue protein sequence, read N- to C-terminus: Iron-sulfur cluster assembly 1 homolog, mitochondrial (139 aa).

Residues Cys52, Cys117, and Cys119 each contribute to the Fe cation site.

It belongs to the HesB/IscA family.

The protein resides in the mitochondrion. Involved in the assembly of mitochondrial iron-sulfur proteins. Probably involved in the binding of an intermediate of Fe/S cluster assembly. The sequence is that of Iron-sulfur cluster assembly 1 homolog, mitochondrial (isca1) from Dictyostelium discoideum (Social amoeba).